We begin with the raw amino-acid sequence, 204 residues long: Acyl-homoserine-lactone synthase (204 aa).

The protein belongs to the autoinducer synthase family.

The catalysed reaction is a fatty acyl-[ACP] + S-adenosyl-L-methionine = an N-acyl-L-homoserine lactone + S-methyl-5'-thioadenosine + holo-[ACP] + H(+). In terms of biological role, required for the synthesis of acyl-HSL autoinducers that bind to SolR. This chain is Acyl-homoserine-lactone synthase (solI), found in Ralstonia solanacearum (Pseudomonas solanacearum).